Here is a 712-residue protein sequence, read N- to C-terminus: Golgin candidate 3 (712 aa).

The segment at 23–49 (DEEEDDLHKYGSANGVSNSDRRNSSGF) is disordered. Positions 36–49 (NGVSNSDRRNSSGF) are enriched in polar residues. Residues 65-134 (AHHEIERYKA…LKEARTDISR (70 aa)) adopt a coiled-coil conformation. Polar residues predominate over residues 135 to 150 (GSNNYAIKGNNDQSPN). Disordered regions lie at residues 135 to 176 (GSNN…TDSF) and 306 to 347 (ESRK…MEQS). Coiled coils occupy residues 197-313 (QATE…LTNS), 340-558 (GKEE…LNRM), and 659-690 (LKDAEERERREAEEAAASKAKQDSERTRQEAA). Basic and acidic residues predominate over residues 328-344 (STLDKEKPESFPGKEEM). The GRIP domain maps to 557-608 (RMSMESDYLVDRRIVIKLLVTYFQKNHNKEVLDLMVRMLGFSEEDKERIGAA). Residues 666 to 712 (ERREAEEAAASKAKQDSERTRQEAALHDSEFSTVPLRSSESNQRLSR) are disordered. Basic and acidic residues predominate over residues 678 to 695 (AKQDSERTRQEAALHDSE). Residues 696-712 (FSTVPLRSSESNQRLSR) show a composition bias toward polar residues.

Interacts with ARF1; preferentially with the active form of the protein.

Its subcellular location is the golgi apparatus. It localises to the endosome. Its function is as follows. Golgi matrix protein playing a role in tethering of vesicles to Golgi membranes and in maintaining the overall structure of the Golgi apparatus. In Arabidopsis thaliana (Mouse-ear cress), this protein is Golgin candidate 3 (GC3).